Here is a 348-residue protein sequence, read N- to C-terminus: D-alanine--D-alanine ligase (348 aa).

The region spanning 132 to 334 (KRILEVAGVP…YSDLIKELVV (203 aa)) is the ATP-grasp domain. 162–217 (LEKLTFPVFVKPANMGSSVGISKAENESELRSAIDLALKYDSRILIEQGVVAREIE) lines the ATP pocket. D288, E301, and N303 together coordinate Mg(2+).

Belongs to the D-alanine--D-alanine ligase family. Mg(2+) serves as cofactor. The cofactor is Mn(2+).

The protein resides in the cytoplasm. It catalyses the reaction 2 D-alanine + ATP = D-alanyl-D-alanine + ADP + phosphate + H(+). Its pathway is cell wall biogenesis; peptidoglycan biosynthesis. In terms of biological role, cell wall formation. This is D-alanine--D-alanine ligase from Streptococcus thermophilus (strain ATCC BAA-491 / LMD-9).